The sequence spans 116 residues: Large ribosomal subunit protein bL17 (116 aa).

The protein belongs to the bacterial ribosomal protein bL17 family. Part of the 50S ribosomal subunit. Contacts protein L32.

The protein is Large ribosomal subunit protein bL17 of Trichodesmium erythraeum (strain IMS101).